A 31-amino-acid polypeptide reads, in one-letter code: Protein YmiC (31 aa).

Residues 9–29 (WSWMGAFSLSMLFWAELLWII) form a helical membrane-spanning segment.

The protein resides in the cell inner membrane. This is Protein YmiC from Escherichia coli (strain K12).